Consider the following 511-residue polypeptide: Archaeal glutamate synthase [NADPH] (511 aa).

4Fe-4S ferredoxin-type domains follow at residues phenylalanine 15–glutamate 44 and aspartate 46–histidine 75. [4Fe-4S] cluster-binding residues include cysteine 24, cysteine 27, cysteine 30, cysteine 34, cysteine 55, cysteine 58, cysteine 61, and cysteine 65.

The protein belongs to the glutamate synthase family. FMN is required as a cofactor.

It catalyses the reaction 2 L-glutamate + NADP(+) = L-glutamine + 2-oxoglutarate + NADPH + H(+). This Archaeoglobus fulgidus (strain ATCC 49558 / DSM 4304 / JCM 9628 / NBRC 100126 / VC-16) protein is Archaeal glutamate synthase [NADPH].